Here is a 414-residue protein sequence, read N- to C-terminus: tRNA N6-adenosine threonylcarbamoyltransferase, mitochondrial (414 aa).

A mitochondrion-targeting transit peptide spans 1–29 (MLMLSKTAGAIPRPPRSNVRGFIRRFNVQ). Residues Lys74 and Lys140 each carry the N6-acetyllysine modification. Positions 147 and 151 each coordinate a divalent metal cation. Residues 169–173 (LISGG) and Asp202 contribute to the substrate site. An N6-acetyllysine modification is found at Lys203. Gly222 and Glu226 together coordinate substrate. Residues Lys230 and Lys299 each carry the N6-acetyllysine modification. Substrate-binding positions include 329-330 (SN) and Thr357. Residue Asp358 coordinates a divalent metal cation.

It belongs to the KAE1 / TsaD family. In terms of assembly, monomer. The cofactor is a divalent metal cation.

Its subcellular location is the mitochondrion. The catalysed reaction is L-threonylcarbamoyladenylate + adenosine(37) in tRNA = N(6)-L-threonylcarbamoyladenosine(37) in tRNA + AMP + H(+). Functionally, required for the formation of a threonylcarbamoyl group on adenosine at position 37 (t(6)A37) in mitochondrial tRNAs that read codons beginning with adenine. Probably involved in the transfer of the threonylcarbamoyl moiety of threonylcarbamoyl-AMP (TC-AMP) to the N6 group of A37. Involved in mitochondrial genome maintenance. The chain is tRNA N6-adenosine threonylcarbamoyltransferase, mitochondrial from Rattus norvegicus (Rat).